Consider the following 574-residue polypeptide: MKLSLVPIFALLSTAFALPVENAERDVPIEERAAAPTVTIASPAATIIGGAGATVETFAGVPFAKPPVGALRLKPPQPITSALGTIKATAQAASCPQFFFSTTINDAIPTSALGLLLNTPVFQQVLNAGEDCLYLNIQRPVGTTASSKLPVLFWIFGGGFELGGTAMYDGSSWVAESIAEGKPIIFVQVAYRVGGFGFLPGAEILADGSANLGLLDQRLGLQWVADNIAAFGGDPSKVTIWGESAGAISVFDQMALYGGDNTYKGKSLFRGAIMNSGSIVPADPVDCPKGQIIYDNVVASAGCSAAANTLTCLRGVPYSTLLNATNSVPGLLSYSSIALSYLPRPDGTALTKSPDLLLASGNWAKVPFIIGDQEDEGTIFALFQSNISTTAQLTTYFSDFFFHNAPTSVLTGLLNTYPNDLISGSPFRTLLLNNWYPQFKRLAAILGDLTFTLTRRVFLKTALKVAPTVPSWSYLSSYDYGTPVLGTFHGSDILQVFNGIKPNYAASASKAYYLSFVNTLDPNNGTSSAYANWPQYSNGAQLLNLYASFGGFISDNFRSTSYDYIVANLPSFYI.

The first 17 residues, 1-17 (MKLSLVPIFALLSTAFA), serve as a signal peptide directing secretion. Cys95 and Cys132 are disulfide-bonded. The active-site Acyl-ester intermediate is Ser244. Cysteines 303 and 312 form a disulfide. Asn323 carries N-linked (GlcNAc...) asparagine glycosylation. Glu376 functions as the Charge relay system in the catalytic mechanism. Asn386 carries N-linked (GlcNAc...) asparagine glycosylation. The active-site Charge relay system is His489. Asn524 carries N-linked (GlcNAc...) asparagine glycosylation.

This sequence belongs to the type-B carboxylesterase/lipase family.

Its subcellular location is the secreted. It carries out the reaction a carboxylic ester + H2O = an alcohol + a carboxylate + H(+). Its function is as follows. Secreted lipase that allows the use of hydrolyzed lipids as carbon sources. Has highest activity with methyl umbelliferyl oleate (C18:1), whereas much lower activities are obtained with the respective esters of palmitate (C16:0) and stearate (C18:0) (24% and 12% of the activity obtained with umbelliferyl oleate, respectively). Hydrolyzes 1- and 3-positioned ester bonds in preference to 2-positioned ester bonds. The production rate of monoglycerides is lower than that of diacylglycerides. Seems not required for the penetration of intact host tissue. This chain is Secreted lipase 1, found in Botryotinia fuckeliana (strain B05.10) (Noble rot fungus).